The chain runs to 125 residues: Small ribosomal subunit protein uS13 (125 aa).

A disordered region spans residues 92–125 (RRSLPVRGQRTRTNARTRKGKRKTVAGKKKAVKK).

It belongs to the universal ribosomal protein uS13 family. In terms of assembly, part of the 30S ribosomal subunit. Forms a loose heterodimer with protein S19. Forms two bridges to the 50S subunit in the 70S ribosome.

Its function is as follows. Located at the top of the head of the 30S subunit, it contacts several helices of the 16S rRNA. In the 70S ribosome it contacts the 23S rRNA (bridge B1a) and protein L5 of the 50S subunit (bridge B1b), connecting the 2 subunits; these bridges are implicated in subunit movement. Contacts the tRNAs in the A and P-sites. The sequence is that of Small ribosomal subunit protein uS13 from Pelodictyon phaeoclathratiforme (strain DSM 5477 / BU-1).